A 440-amino-acid polypeptide reads, in one-letter code: Peroxisome proliferator-activated receptor delta (440 aa).

Residues 1-53 (MEQPQEETPEAREEEKEEVAMGDGAPELNGGPEHTLPSSSCADLSQNSSPSSL) are disordered. Residues 36 to 53 (LPSSSCADLSQNSSPSSL) are compositionally biased toward polar residues. The segment at residues 70-144 (NMECRVCGDK…LGMSHNAIRF (75 aa)) is a DNA-binding region (nuclear receptor). 2 NR C4-type zinc fingers span residues 73 to 93 (CRVC…CEGC) and 110 to 132 (CDRI…FQKC). The NR LBD domain occupies 210 to 438 (FVIHDIETLW…HPLLQEIYKD (229 aa)).

This sequence belongs to the nuclear hormone receptor family. NR1 subfamily. As to quaternary structure, heterodimer with the retinoid X receptor. Interacts (via domain NR LBD) with CRY1 and CRY2 in a ligand-dependent manner. In terms of processing, 'Lys-48'-linked polyubiquitinated; leading to proteasomal degradation. Deubiquitinated and stabilized by OTUD3. Heart, adrenal and intestine.

Its subcellular location is the nucleus. In terms of biological role, ligand-activated transcription factor key mediator of energy metabolism in adipose tissues. Receptor that binds peroxisome proliferators such as hypolipidemic drugs and fatty acids. Has a preference for poly-unsaturated fatty acids, such as gamma-linoleic acid and eicosapentanoic acid. Once activated by a ligand, the receptor binds to promoter elements of target genes. Regulates the peroxisomal beta-oxidation pathway of fatty acids. Functions as transcription activator for the acyl-CoA oxidase gene. Decreases expression of NPC1L1 once activated by a ligand. The chain is Peroxisome proliferator-activated receptor delta (Ppard) from Mus musculus (Mouse).